The sequence spans 94 residues: Defensin alpha 5 (94 aa).

The signal sequence occupies residues 1-19 (MRTIAILAAILLVALQAQA). 3 disulfide bridges follow: cysteine 65–cysteine 93, cysteine 67–cysteine 82, and cysteine 72–cysteine 92.

It belongs to the alpha-defensin family. Homodimer. Homotetramer. Interacts with B.antracis lef/lethal factor. Post-translationally, glycosylated. Proteolytically cleaved at Arg-62 by trypsin. Both the propeptide form proHD5/HD5(20-94) and HD5(56-94) are cleaved into the lumenal peptide form HD5(63-94) by trypsin. Unprocessed proHD5 exerts antimicrobial activities, but peptide potency is enhanced by peptide processing. Proteolytically cleaved in duodenal fluid; derived fragments are antimicrobially active against commensal bacteria (in vitro).

The protein localises to the secreted. It localises to the cytoplasmic vesicle. Its subcellular location is the secretory vesicle. Host-defense peptide that maintains sterility in the urogenital system. Has antimicrobial activity against a wide range of bacteria, including Gram-negative E.coli, P.aeruginosa and S.typhimurium, and Gram-positive E.aerogenes, S.aureus, B.cereus, E.faecium and L.monocytogenes. Confers resistance to intestinal infection by S.typhimurium. Exhibits antimicrobial activity against enteric commensal bacteria such as B.adolescentis, L.acidophilus, B.breve, L.fermentum, B.longum and S.thermophilus. Binds to bacterial membranes and causes membrane disintegration. Induces the secretion of the chemokine IL-8 by intestinal epithelial cells. Binds to B.antracis lef/lethal factor, a major virulence factor from B.anthracis, and neutralizes its enzymatic activity. The polypeptide is Defensin alpha 5 (DEFA5) (Pan troglodytes (Chimpanzee)).